We begin with the raw amino-acid sequence, 569 residues long: 2-succinyl-5-enolpyruvyl-6-hydroxy-3-cyclohexene-1-carboxylate synthase (569 aa).

It belongs to the TPP enzyme family. MenD subfamily. In terms of assembly, homodimer. Mg(2+) serves as cofactor. The cofactor is Mn(2+). Requires thiamine diphosphate as cofactor.

It catalyses the reaction isochorismate + 2-oxoglutarate + H(+) = 5-enolpyruvoyl-6-hydroxy-2-succinyl-cyclohex-3-ene-1-carboxylate + CO2. It participates in quinol/quinone metabolism; 1,4-dihydroxy-2-naphthoate biosynthesis; 1,4-dihydroxy-2-naphthoate from chorismate: step 2/7. Its pathway is quinol/quinone metabolism; menaquinone biosynthesis. Its function is as follows. Catalyzes the thiamine diphosphate-dependent decarboxylation of 2-oxoglutarate and the subsequent addition of the resulting succinic semialdehyde-thiamine pyrophosphate anion to isochorismate to yield 2-succinyl-5-enolpyruvyl-6-hydroxy-3-cyclohexene-1-carboxylate (SEPHCHC). The sequence is that of 2-succinyl-5-enolpyruvyl-6-hydroxy-3-cyclohexene-1-carboxylate synthase from Paenarthrobacter aurescens (strain TC1).